A 391-amino-acid polypeptide reads, in one-letter code: 2,4,6-trihydroxybenzophenone synthase (391 aa).

The active site involves Cys-165.

This sequence belongs to the thiolase-like superfamily. Chalcone/stilbene synthases family. In terms of assembly, homodimer. Expressed in young fruit pericarp.

The enzyme catalyses benzoyl-CoA + 3 malonyl-CoA + 2 H(+) = 2,4,6-trihydroxybenzophenone + 3 CO2 + 4 CoA. Its function is as follows. Type III polyketide synthase involved in the biosynthesis of benzophenones and xanthones. Produces mainly 2,4,6-trihydroxybenzophenone together with minor amounts of tetraketide lactone, triketide lactone and diketide lactone. The preferred substrate is benzoyl-CoA, but can also use acetyl-CoA, phenylacetyl-CoA, hexanoyl-CoA, cinnamoyl-CoA, p-coumaroyl-CoA and salicoyl-CoA. The sequence is that of 2,4,6-trihydroxybenzophenone synthase (BPS) from Garcinia mangostana (Mangosteen).